The primary structure comprises 354 residues: MEEQTTSLVWIYVNSTEQLNTSYEYNTTYLIEDSDKYQSYVIGLFLSCLYTILLFPIGFIGNILILVVNLNHRGKMAIPDLYFVNLAVADLILVADSLIEVFNLNEKYYDYAVLCTFMSLFLQVNMYSSIFFLTWMSFDRYIALANSMSSSPLRTMQHAKLSCGLIWMASILATLLPFTIVQTQHRGEVHFCFANVFEIQWLEVTIGFLVPFSIIGLCYSLIGRILMRSQKHRGLWPRRQKALRMIVVVVLVFFICWLPENVFISIQLLQGTADPSQRTATTLRHDYPLTGHIVNLAAFSNSCLNPIIYSFLGETFRDKLRLFIKQKASWSVVNRFCHHGLDLHLPVRSEVSEV.

Over 1–40 the chain is Extracellular; it reads MEEQTTSLVWIYVNSTEQLNTSYEYNTTYLIEDSDKYQSY. A helical membrane pass occupies residues 41–61; the sequence is VIGLFLSCLYTILLFPIGFIG. Residues 62–81 lie on the Cytoplasmic side of the membrane; that stretch reads NILILVVNLNHRGKMAIPDL. A helical membrane pass occupies residues 82–102; the sequence is YFVNLAVADLILVADSLIEVF. The Extracellular segment spans residues 103-112; it reads NLNEKYYDYA. The helical transmembrane segment at 113 to 133 threads the bilayer; that stretch reads VLCTFMSLFLQVNMYSSIFFL. Cys-115 and Cys-192 are joined by a disulfide. The Cytoplasmic portion of the chain corresponds to 134-160; sequence TWMSFDRYIALANSMSSSPLRTMQHAK. Residues 161–181 traverse the membrane as a helical segment; sequence LSCGLIWMASILATLLPFTIV. Over 182–202 the chain is Extracellular; that stretch reads QTQHRGEVHFCFANVFEIQWL. A helical transmembrane segment spans residues 203-223; sequence EVTIGFLVPFSIIGLCYSLIG. Residues 224-245 lie on the Cytoplasmic side of the membrane; that stretch reads RILMRSQKHRGLWPRRQKALRM. The chain crosses the membrane as a helical span at residues 246 to 266; that stretch reads IVVVVLVFFICWLPENVFISI. Topologically, residues 267–292 are extracellular; it reads QLLQGTADPSQRTATTLRHDYPLTGH. Residues 293–313 traverse the membrane as a helical segment; sequence IVNLAAFSNSCLNPIIYSFLG. Over 314–353 the chain is Cytoplasmic; sequence ETFRDKLRLFIKQKASWSVVNRFCHHGLDLHLPVRSEVSE.

The protein belongs to the G-protein coupled receptor 1 family. In terms of assembly, homodimer. Heterodimer. As to expression, expressed in oocytes (at protein level). Highly expressed in brain, heart, testis and ovary. Weakly expressed in muscle and intestine.

It is found in the nucleus. The protein localises to the cytoplasm. The protein resides in the perinuclear region. It localises to the cytoskeleton. Its subcellular location is the cytoplasmic vesicle membrane. It is found in the cell membrane. The protein localises to the basolateral cell membrane. The protein resides in the endoplasmic reticulum membrane. It localises to the early endosome. Its subcellular location is the recycling endosome. It is found in the golgi apparatus. The protein localises to the trans-Golgi network. The protein resides in the golgi apparatus membrane. It localises to the cell projection. Its subcellular location is the dendrite. It is found in the dendritic spine membrane. The protein localises to the axon. The protein resides in the postsynaptic density. It localises to the mitochondrion membrane. Functionally, membrane G-protein coupled estrogen receptor that binds to 17-beta-estradiol (E2) with high affinity, leading to rapid and transient activation of numerous intracellular signaling pathways. Plays a role in the embryonic development of sensory and motor neurons. May induce apoptosis and reduce proliferation of brain cells. Involved in maintenance of meiotic arrest in oocytes. The sequence is that of G-protein coupled estrogen receptor 1 (gper1) from Micropogonias undulatus (Atlantic croaker).